Reading from the N-terminus, the 198-residue chain is Na(+)-translocating NADH-quinone reductase subunit E (198 aa).

The next 6 membrane-spanning stretches (helical) occupy residues 11-31, 39-59, 77-97, 110-130, 140-160, and 176-196; these read SIFI…FLAV, FGLG…NNLV, FLNF…LEMV, GIFL…SFMV, IVYG…LAGI, and LGIT…FSGV.

Belongs to the NqrDE/RnfAE family. In terms of assembly, composed of six subunits; NqrA, NqrB, NqrC, NqrD, NqrE and NqrF.

The protein resides in the cell inner membrane. The enzyme catalyses a ubiquinone + n Na(+)(in) + NADH + H(+) = a ubiquinol + n Na(+)(out) + NAD(+). Its function is as follows. NQR complex catalyzes the reduction of ubiquinone-1 to ubiquinol by two successive reactions, coupled with the transport of Na(+) ions from the cytoplasm to the periplasm. NqrA to NqrE are probably involved in the second step, the conversion of ubisemiquinone to ubiquinol. The chain is Na(+)-translocating NADH-quinone reductase subunit E from Vibrio campbellii (strain ATCC BAA-1116).